Here is a 643-residue protein sequence, read N- to C-terminus: Mitochondrial Rho GTPase 2 (643 aa).

The Cytoplasmic segment spans residues 1 to 611; the sequence is MMLGGKSSAG…SGRRSRNIRQ (611 aa). In terms of domain architecture, Miro 1 spans 12–179; the sequence is RTSLRVAVAG…FYFASKAVLH (168 aa). EF-hand domains lie at 195-230 and 315-350; these read RLRRAVQRIFNLCDHDLDGALNDAELNDFQVNCFGA and EAMDFLSGIFQLYDLDNDGALQPAELDDLFQTAPDS. The Ca(2+) site is built by D208, D210, D212, E219, D328, D330, D332, and E339. The region spanning 423–592 is the Miro 2 domain; that stretch reads RNVFQCFVFG…FSRIVSTAEN (170 aa). Residues 612 to 632 form a helical membrane-spanning segment; the sequence is LVNSSLLFVSVGTAVGFAGLA. Residues 633–643 are Mitochondrial intermembrane-facing; the sequence is AYRAYSARKNA.

The protein belongs to the mitochondrial Rho GTPase family. Expressed roots, rosette and cauline leaves, stems, flowers and siliques.

It localises to the mitochondrion outer membrane. With respect to regulation, activated by calcium. In terms of biological role, calcium-binding mitochondrial GTPase involved in calcium signaling during salt stress response. May play a role in the progression of embryonic cell division, development of haploid male and female gametes, and pollen tube growth. The sequence is that of Mitochondrial Rho GTPase 2 from Arabidopsis thaliana (Mouse-ear cress).